We begin with the raw amino-acid sequence, 401 residues long: Large ribosomal subunit protein uL4 (401 aa).

It belongs to the universal ribosomal protein uL4 family.

In Drosophila melanogaster (Fruit fly), this protein is Large ribosomal subunit protein uL4 (RpL4).